The chain runs to 166 residues: MFPMVTEFMNYGQQTVRAARYIGQGFMITLSHANRLPVTIQYPYEKLITSERFRGRIHFEFDKCIACEVCVRVCPIDLPVVDWKLETDIRKKRLLNYSIDFGICIFCGNCVEYCPTNCLSMTEEYELSTYDRHELNYNQIALGRLPMSIIDDYTIRTILNLPEIKT.

2 consecutive 4Fe-4S ferredoxin-type domains span residues 55 to 84 (GRIH…VDWK) and 95 to 124 (LNYS…MTEE). Positions 64, 67, 70, 74, 104, 107, 110, and 114 each coordinate [4Fe-4S] cluster.

The protein belongs to the complex I 23 kDa subunit family. NDH is composed of at least 16 different subunits, 5 of which are encoded in the nucleus. [4Fe-4S] cluster is required as a cofactor.

Its subcellular location is the plastid. It is found in the chloroplast thylakoid membrane. The enzyme catalyses a plastoquinone + NADH + (n+1) H(+)(in) = a plastoquinol + NAD(+) + n H(+)(out). It carries out the reaction a plastoquinone + NADPH + (n+1) H(+)(in) = a plastoquinol + NADP(+) + n H(+)(out). NDH shuttles electrons from NAD(P)H:plastoquinone, via FMN and iron-sulfur (Fe-S) centers, to quinones in the photosynthetic chain and possibly in a chloroplast respiratory chain. The immediate electron acceptor for the enzyme in this species is believed to be plastoquinone. Couples the redox reaction to proton translocation, and thus conserves the redox energy in a proton gradient. In Pericome caudata (Mountain tail-leaf), this protein is NAD(P)H-quinone oxidoreductase subunit I, chloroplastic.